We begin with the raw amino-acid sequence, 178 residues long: QTVQVEPPYYAGDGEYLMVDLIWTQCEPCTQCFSQDSSSFSTLPCESQYCQDLPSETCDCQYTYGYGDGSSTQGYMAXEDGSSVPNIAFGCGDNLQIDSGTTLTYLPQDAYNAVAQAFTDQINLPTVDESSSGLSTCFQEPSDGSTVQVPEISMQDGGVLNDLQNLAVSFFPTQCGAS.

Asp-98 is a catalytic residue.

This sequence belongs to the peptidase A1 family.

The protein resides in the secreted. The catalysed reaction is Similar to pepsin, but also cleaves on either side of Asp and at Lys-|-Arg.. With respect to regulation, inhibited by pepstatin and by diazoacetyl-D,L-norleucine methyl ester (DAN) in the presence of Cu(2+) ions. Its function is as follows. Extracellular proteinase found in the pitcher fluid of carnivorous plants. Digest prey for nitrogen uptake. In Nepenthes distillatoria (Pitcher plant), this protein is Aspartic proteinase nepenthesin-2.